Here is a 243-residue protein sequence, read N- to C-terminus: Ubiquinone biosynthesis O-methyltransferase (243 aa).

Arg45, Gly65, Asp86, and Leu130 together coordinate S-adenosyl-L-methionine.

It belongs to the methyltransferase superfamily. UbiG/COQ3 family.

The catalysed reaction is a 3-demethylubiquinol + S-adenosyl-L-methionine = a ubiquinol + S-adenosyl-L-homocysteine + H(+). It catalyses the reaction a 3-(all-trans-polyprenyl)benzene-1,2-diol + S-adenosyl-L-methionine = a 2-methoxy-6-(all-trans-polyprenyl)phenol + S-adenosyl-L-homocysteine + H(+). The protein operates within cofactor biosynthesis; ubiquinone biosynthesis. Functionally, O-methyltransferase that catalyzes the 2 O-methylation steps in the ubiquinone biosynthetic pathway. The polypeptide is Ubiquinone biosynthesis O-methyltransferase (Idiomarina loihiensis (strain ATCC BAA-735 / DSM 15497 / L2-TR)).